A 300-amino-acid polypeptide reads, in one-letter code: MGRCLTKKVFLIQSPILFLHLLISLSSGAVKPDLKGVCVSKGGRFPPYELEGKPPKSVGRGSKDLTLCRVFRKKTCCSSVQTNPAFVAVRNLATYGEASQECLELFELLECSICNPNVGIQPGPPRICASFCDRVFEACKDAYFASNALKRVIGPCGVNDDIICIKASNWESNGTSFCEAAGFAVQRNDDSREKPCYGSKASLESVVESWSRDSRKETPLKTETLSCFKDLLQWVREMTTIQKISLGMSFLIAGMFLIRQSNNRNQKQRLAAIQRTARRLRGNGNGDSYSAAINRRTSSD.

The N-terminal stretch at 1-28 (MGRCLTKKVFLIQSPILFLHLLISLSSG) is a signal peptide. Disulfide bonds link C38–C76, C68–C111, C77–C114, C102–C139, and C132–C178. N-linked (GlcNAc...) asparagine glycosylation occurs at N173. A helical transmembrane segment spans residues 238–258 (MTTIQKISLGMSFLIAGMFLI).

Belongs to the folate receptor family. Expressed in leaves.

The protein resides in the membrane. Functionally, folic acid-binding protein involved in salicylic acid- (SA-) induced folate accumulation by triggering uptake and accumulation of folic acid in cells. May be implicated in the transport of the folates from the site of production (leaves) to the site of storage (fruits and seeds) and utilization (roots). The sequence is that of Folate-binding protein 1 from Arabidopsis thaliana (Mouse-ear cress).